Consider the following 62-residue polypeptide: UPF0291 protein CLD_1956 (62 aa).

The protein belongs to the UPF0291 family.

It is found in the cytoplasm. This is UPF0291 protein CLD_1956 from Clostridium botulinum (strain Okra / Type B1).